The chain runs to 880 residues: Alanine--tRNA ligase (880 aa).

Zn(2+) contacts are provided by histidine 558, histidine 562, cysteine 663, and histidine 667.

Belongs to the class-II aminoacyl-tRNA synthetase family. Zn(2+) serves as cofactor.

The protein resides in the cytoplasm. The enzyme catalyses tRNA(Ala) + L-alanine + ATP = L-alanyl-tRNA(Ala) + AMP + diphosphate. Functionally, catalyzes the attachment of alanine to tRNA(Ala) in a two-step reaction: alanine is first activated by ATP to form Ala-AMP and then transferred to the acceptor end of tRNA(Ala). Also edits incorrectly charged Ser-tRNA(Ala) and Gly-tRNA(Ala) via its editing domain. This is Alanine--tRNA ligase from Mycoplasmopsis agalactiae (strain NCTC 10123 / CIP 59.7 / PG2) (Mycoplasma agalactiae).